We begin with the raw amino-acid sequence, 252 residues long: 3-dehydroquinate dehydratase (252 aa).

Residues Ser21, 46 to 48 (EWR), and Arg82 each bind 3-dehydroquinate. His143 (proton donor/acceptor) is an active-site residue. The Schiff-base intermediate with substrate role is filled by Lys170. 3 residues coordinate 3-dehydroquinate: Arg213, Ser232, and Gln236.

The protein belongs to the type-I 3-dehydroquinase family. Homodimer.

It carries out the reaction 3-dehydroquinate = 3-dehydroshikimate + H2O. Its pathway is metabolic intermediate biosynthesis; chorismate biosynthesis; chorismate from D-erythrose 4-phosphate and phosphoenolpyruvate: step 3/7. Involved in the third step of the chorismate pathway, which leads to the biosynthesis of aromatic amino acids. Catalyzes the cis-dehydration of 3-dehydroquinate (DHQ) and introduces the first double bond of the aromatic ring to yield 3-dehydroshikimate. The polypeptide is 3-dehydroquinate dehydratase (Shigella flexneri serotype 5b (strain 8401)).